We begin with the raw amino-acid sequence, 191 residues long: Cytochrome c biogenesis ATP-binding export protein CcmA (191 aa).

In terms of domain architecture, ABC transporter spans 2 to 190; that stretch reads LSLHQLQFKN…SIKSAQILRI (189 aa). 29–36 serves as a coordination point for ATP; sequence GANGCGKS.

The protein belongs to the ABC transporter superfamily. CcmA exporter (TC 3.A.1.107) family. The complex is composed of two ATP-binding proteins (CcmA) and two transmembrane proteins (CcmB).

The protein localises to the cell inner membrane. The catalysed reaction is heme b(in) + ATP + H2O = heme b(out) + ADP + phosphate + H(+). In terms of biological role, part of the ABC transporter complex CcmAB involved in the biogenesis of c-type cytochromes; once thought to export heme, this seems not to be the case, but its exact role is uncertain. Responsible for energy coupling to the transport system. The sequence is that of Cytochrome c biogenesis ATP-binding export protein CcmA from Rickettsia conorii (strain ATCC VR-613 / Malish 7).